The chain runs to 423 residues: COP9 signalosome complex subunit 3 (423 aa).

A2 carries the post-translational modification N-acetylalanine. Positions 197–365 (NFERALYFYE…GMVSFHDNPE (169 aa)) constitute a PCI domain. A disordered region spans residues 402-423 (QFVQKSMGSQEDDSGNKPSSYS). Phosphoserine is present on residues S407, S410, and S423.

The protein belongs to the CSN3 family. As to quaternary structure, component of the CSN complex, composed of COPS1/GPS1, COPS2, COPS3, COPS4, COPS5, COPS6, COPS7 (COPS7A or COPS7B), COPS8 and COPS9. In the complex, it probably interacts directly with COPS1, COPS4, COPS8 and COPS9. Interacts with CK2 and PKD. Interacts with the translation initiation factor EIF3S6 and IKBKG. Interacts with ERCC6. As to expression, widely expressed.

The protein localises to the cytoplasm. It localises to the nucleus. Component of the COP9 signalosome complex (CSN), a complex involved in various cellular and developmental processes. The CSN complex is an essential regulator of the ubiquitin (Ubl) conjugation pathway by mediating the deneddylation of the cullin subunits of SCF-type E3 ligase complexes, leading to decrease the Ubl ligase activity of SCF-type complexes such as SCF, CSA or DDB2. The complex is also involved in phosphorylation of p53/TP53, c-jun/JUN, IkappaBalpha/NFKBIA, ITPK1 and IRF8/ICSBP, possibly via its association with CK2 and PKD kinases. CSN-dependent phosphorylation of TP53 and JUN promotes and protects degradation by the Ubl system, respectively. Essential to maintain the survival of epiblast cells and thus the development of the postimplantation embryo. The polypeptide is COP9 signalosome complex subunit 3 (Cops3) (Mus musculus (Mouse)).